We begin with the raw amino-acid sequence, 190 residues long: NADH-quinone oxidoreductase subunit B (190 aa).

Residues Cys69, Cys70, Cys134, and Cys164 each coordinate [4Fe-4S] cluster.

This sequence belongs to the complex I 20 kDa subunit family. As to quaternary structure, NDH-1 is composed of 14 different subunits. Subunits NuoB, C, D, E, F, and G constitute the peripheral sector of the complex. [4Fe-4S] cluster is required as a cofactor.

The protein resides in the cell inner membrane. It carries out the reaction a quinone + NADH + 5 H(+)(in) = a quinol + NAD(+) + 4 H(+)(out). Its function is as follows. NDH-1 shuttles electrons from NADH, via FMN and iron-sulfur (Fe-S) centers, to quinones in the respiratory chain. Couples the redox reaction to proton translocation (for every two electrons transferred, four hydrogen ions are translocated across the cytoplasmic membrane), and thus conserves the redox energy in a proton gradient. The sequence is that of NADH-quinone oxidoreductase subunit B from Chelativorans sp. (strain BNC1).